The following is a 125-amino-acid chain: Calcitonin receptor-stimulating peptide 2 (125 aa).

The first 25 residues, 1 to 25, serve as a signal peptide directing secretion; sequence MGFWKFLPFLVLSFLVVYQAGMFQA. A propeptide spanning residues 26–77 is cleaved from the precursor; it reads APFRSALENDFDPAILTEKEMCLLLAAVMNDYVQMKTSELKQEAEHFHITAQ. Cysteine 81 and cysteine 86 form a disulfide bridge.

The protein belongs to the calcitonin family.

It is found in the secreted. This chain is Calcitonin receptor-stimulating peptide 2 (CRSP2), found in Capra hircus (Goat).